Consider the following 188-residue polypeptide: UPF0301 protein Mmwyl1_0539 (188 aa).

The protein belongs to the UPF0301 (AlgH) family.

The protein is UPF0301 protein Mmwyl1_0539 of Marinomonas sp. (strain MWYL1).